We begin with the raw amino-acid sequence, 159 residues long: Protein-export protein SecB (159 aa).

The protein belongs to the SecB family. Homotetramer, a dimer of dimers. One homotetramer interacts with 1 SecA dimer.

It localises to the cytoplasm. Its function is as follows. One of the proteins required for the normal export of preproteins out of the cell cytoplasm. It is a molecular chaperone that binds to a subset of precursor proteins, maintaining them in a translocation-competent state. It also specifically binds to its receptor SecA. The chain is Protein-export protein SecB from Shewanella amazonensis (strain ATCC BAA-1098 / SB2B).